A 120-amino-acid polypeptide reads, in one-letter code: uncharacterized protein (120 aa).

To B.subtilis XkdH.

This is an uncharacterized protein from Bacillus subtilis (strain 168).